Here is a 238-residue protein sequence, read N- to C-terminus: Alpha-tubulin N-acetyltransferase (238 aa).

The region spanning 1–196 (MEFDFDISQS…NNFVVFEDLF (196 aa)) is the N-acetyltransferase domain. Residues 129-142 (FYVH…GNGK) and 165-174 (SFKFLSFLQK) each bind acetyl-CoA.

The protein belongs to the acetyltransferase ATAT1 family.

The catalysed reaction is L-lysyl-[alpha-tubulin] + acetyl-CoA = N(6)-acetyl-L-lysyl-[alpha-tubulin] + CoA + H(+). Specifically acetylates 'Lys-40' in alpha-tubulin on the lumenal side of microtubules. Promotes microtubule destabilization and accelerates microtubule dynamics; this activity may be independent of acetylation activity. Acetylates alpha-tubulin with a slow enzymatic rate, due to a catalytic site that is not optimized for acetyl transfer. Enters the microtubule through each end and diffuses quickly throughout the lumen of microtubules. Acetylates only long/old microtubules because of its slow acetylation rate since it does not have time to act on dynamically unstable microtubules before the enzyme is released. In Trichoplax adhaerens (Trichoplax reptans), this protein is Alpha-tubulin N-acetyltransferase.